A 396-amino-acid polypeptide reads, in one-letter code: Aspartate aminotransferase (396 aa).

L-aspartate-binding residues include G34, W130, and N183. K246 is modified (N6-(pyridoxal phosphate)lysine). Position 374 (R374) interacts with L-aspartate.

This sequence belongs to the class-I pyridoxal-phosphate-dependent aminotransferase family. Homodimer. Pyridoxal 5'-phosphate is required as a cofactor.

The protein resides in the cytoplasm. It carries out the reaction L-aspartate + 2-oxoglutarate = oxaloacetate + L-glutamate. This chain is Aspartate aminotransferase (aspC), found in Escherichia coli (strain K12).